The chain runs to 146 residues: 3-dehydroquinate dehydratase (146 aa).

Residue tyrosine 23 is the Proton acceptor of the active site. Substrate is bound by residues asparagine 74, histidine 80, and aspartate 87. Histidine 100 functions as the Proton donor in the catalytic mechanism. Substrate is bound by residues 101 to 102 and arginine 111; that span reads IS.

Belongs to the type-II 3-dehydroquinase family. In terms of assembly, homododecamer.

The catalysed reaction is 3-dehydroquinate = 3-dehydroshikimate + H2O. Its pathway is metabolic intermediate biosynthesis; chorismate biosynthesis; chorismate from D-erythrose 4-phosphate and phosphoenolpyruvate: step 3/7. Its function is as follows. Catalyzes a trans-dehydration via an enolate intermediate. The protein is 3-dehydroquinate dehydratase of Bacillus cereus (strain ATCC 14579 / DSM 31 / CCUG 7414 / JCM 2152 / NBRC 15305 / NCIMB 9373 / NCTC 2599 / NRRL B-3711).